A 185-amino-acid polypeptide reads, in one-letter code: HTH-type transcriptional repressor OpcR (185 aa).

Positions 49-73 (LSELSEATGMSKTRMSQVVREMIDA) form a DNA-binding region, H-T-H motif.

It belongs to the GbsR family.

Is not choline-responsive. Its function is as follows. Negatively regulates the transcription of the opuC operon. In the absence of GbsR, is also a negative regulator of the opuB operon. Binds to an inverted repeat in the promoter region of the operons. This is HTH-type transcriptional repressor OpcR (opcR) from Bacillus subtilis (strain 168).